The primary structure comprises 85 residues: Large ribosomal subunit protein bL27 (85 aa).

Residues 1 to 20 (MAHKKAAGSTRNGRDSEAKR) form a disordered region.

It belongs to the bacterial ribosomal protein bL27 family.

This is Large ribosomal subunit protein bL27 from Colwellia psychrerythraea (strain 34H / ATCC BAA-681) (Vibrio psychroerythus).